Reading from the N-terminus, the 703-residue chain is Fatty acid oxidation complex subunit alpha (703 aa).

Residues 1–190 (MSEQKAFSLN…KLGVVDACVP (190 aa)) form an enoyl-CoA hydratase region. The 3-hydroxyacyl-CoA dehydrogenase stretch occupies residues 308–703 (AAVKKVGVLG…TRAGEGRTFY (396 aa)).

The protein in the N-terminal section; belongs to the enoyl-CoA hydratase/isomerase family. In the central section; belongs to the 3-hydroxyacyl-CoA dehydrogenase family. In terms of assembly, heterotetramer of two alpha chains (FadJ) and two beta chains (FadI).

The protein resides in the cytoplasm. It carries out the reaction a (3S)-3-hydroxyacyl-CoA = a (2E)-enoyl-CoA + H2O. The enzyme catalyses a 4-saturated-(3S)-3-hydroxyacyl-CoA = a (3E)-enoyl-CoA + H2O. The catalysed reaction is a (3S)-3-hydroxyacyl-CoA + NAD(+) = a 3-oxoacyl-CoA + NADH + H(+). It catalyses the reaction (3S)-3-hydroxybutanoyl-CoA = (3R)-3-hydroxybutanoyl-CoA. The protein operates within lipid metabolism; fatty acid beta-oxidation. Catalyzes the formation of a hydroxyacyl-CoA by addition of water on enoyl-CoA. Also exhibits 3-hydroxyacyl-CoA epimerase and 3-hydroxyacyl-CoA dehydrogenase activities. This chain is Fatty acid oxidation complex subunit alpha, found in Vibrio parahaemolyticus serotype O3:K6 (strain RIMD 2210633).